We begin with the raw amino-acid sequence, 64 residues long: MKKIDELRNMSVEELQNELLSLRKDQFNLRMKKASGSLDKTHLITMVRKSVAKVKTILTEKAGK.

It belongs to the universal ribosomal protein uL29 family.

The polypeptide is Large ribosomal subunit protein uL29 (Legionella pneumophila (strain Lens)).